Reading from the N-terminus, the 265-residue chain is MSCQTQLLSASEAALGEDFLSALSTDLDNWALFLDIDGTLLDLAETPDAVAVPPSLPASLDHLSKKLGGALALVTGRGLDYADQLFSPANFPIAGLHGAERRDPDGRVHKAAETADFERLKAELVAATASWAGVLIEDKGAAVAAHYRLAPDRQLELEQLMEWALYRAGPDWAIQHGKMVVEIRPARANKGDAVAAFLGQPPFAGRRAIAIGDDVTDEAMFRTVNRLGGLSIRIGPPVPASEALGSIPSAEALRGIIAALALLNI.

Residue D35 is the Nucleophile of the active site. Mg(2+) contacts are provided by D35, D37, and D213. Residue D35–D37 coordinates substrate.

The protein belongs to the trehalose phosphatase family. It depends on Mg(2+) as a cofactor.

It catalyses the reaction alpha,alpha-trehalose 6-phosphate + H2O = alpha,alpha-trehalose + phosphate. It participates in glycan biosynthesis; trehalose biosynthesis. In terms of biological role, removes the phosphate from trehalose 6-phosphate to produce free trehalose. The protein is Probable trehalose-phosphate phosphatase (otsB) of Sinorhizobium fredii (strain NBRC 101917 / NGR234).